The following is a 417-amino-acid chain: GTP-binding protein YPT11 (417 aa).

The segment at 1–34 is disordered; it reads MSQRKRYSLNVVTSPSIPSPTPSAPIRTNESNWE. GTP contacts are provided by residues 97-104, 228-232, and 292-295; these read GDANVGKT, DTAGQ, and NKID. Residues C415 and C416 are each lipidated (S-geranylgeranyl cysteine).

It belongs to the small GTPase superfamily. Rab family. Interacts with MYO2 (via C-terminal tail domain). Interacts with YIF1, YIP3, YIP4 and YIP5.

The protein localises to the endoplasmic reticulum membrane. The protein resides in the bud tip. It localises to the bud neck. Involved in the positive control of both endoplasmic reticulum (ER) and mitochondrion inheritance during cell divison. Required for the MYO2-dependent retention of newly inherited mitochondria at the bud tip in developing daughter cells. The polypeptide is GTP-binding protein YPT11 (YPT11) (Saccharomyces cerevisiae (strain YJM789) (Baker's yeast)).